Here is a 349-residue protein sequence, read N- to C-terminus: AdoMet-dependent heme synthase (349 aa).

Residues Thr-5–Glu-214 form the Radical SAM core domain. [4Fe-4S] cluster-binding residues include Cys-19, Cys-23, and Cys-26.

Belongs to the radical SAM superfamily. [4Fe-4S] cluster serves as cofactor.

It carries out the reaction Fe-coproporphyrin III + 2 S-adenosyl-L-methionine = heme b + 2 5'-deoxyadenosine + 2 L-methionine + 2 CO2. The protein operates within porphyrin-containing compound metabolism; protoheme biosynthesis. Functionally, involved in siroheme-dependent heme b biosynthesis. Catalyzes the conversion of Fe-coproporphyrin III into heme by the oxidative decarboxylation of two propionate side chains. The chain is AdoMet-dependent heme synthase from Methanosarcina barkeri (strain Fusaro / DSM 804).